Consider the following 707-residue polypeptide: Elongation factor G (707 aa).

The region spanning 8–297 is the tr-type G domain; it reads ERVRNIGIAA…AVVDYLPSPV (290 aa). GTP contacts are provided by residues 17–24, 96–100, and 150–153; these read AHIDAGKT, DTPGH, and NKMD.

The protein belongs to the TRAFAC class translation factor GTPase superfamily. Classic translation factor GTPase family. EF-G/EF-2 subfamily.

It is found in the cytoplasm. Functionally, catalyzes the GTP-dependent ribosomal translocation step during translation elongation. During this step, the ribosome changes from the pre-translocational (PRE) to the post-translocational (POST) state as the newly formed A-site-bound peptidyl-tRNA and P-site-bound deacylated tRNA move to the P and E sites, respectively. Catalyzes the coordinated movement of the two tRNA molecules, the mRNA and conformational changes in the ribosome. The chain is Elongation factor G from Synechococcus sp. (strain JA-2-3B'a(2-13)) (Cyanobacteria bacterium Yellowstone B-Prime).